A 560-amino-acid chain; its full sequence is Glycolate permease GlcA (560 aa).

Residues 1–13 (MVTWTQMYMPMGG) lie on the Cytoplasmic side of the membrane. The chain crosses the membrane as a helical span at residues 14-34 (LGLSALVALIPIIFFFVALAV). The Periplasmic portion of the chain corresponds to 35–41 (LRLKGHV). A helical membrane pass occupies residues 42 to 62 (AGAITLILSILIAIFAFKMPI). Over 63 to 69 (DMAFAAA) the chain is Cytoplasmic. Residues 70-90 (GYGFIYGLWPIAWIIVAAVFL) form a helical membrane-spanning segment. Residues 91 to 130 (YKLTVASGQFDIIRSSVISITDDQRLQVLLIGFSFGALLE) lie on the Periplasmic side of the membrane. A helical membrane pass occupies residues 131–151 (GAAGFGAPVAITGALLVGLGF). Over 152 to 158 (KPLYAAG) the chain is Cytoplasmic. A helical membrane pass occupies residues 159-179 (LCLIANTAPVAFGALGVPILV). Over 180–199 (AGQVTGIDPFHIGAMAGRQL) the chain is Periplasmic. Residues 200–220 (PFLSVLVPFWLVAMMDGWKGV) form a helical membrane-spanning segment. The Cytoplasmic segment spans residues 221 to 225 (KETWP). A helical membrane pass occupies residues 226–246 (AALVAGGSFAVTQFFTSNYIG). The Periplasmic segment spans residues 247–248 (PE). The chain crosses the membrane as a helical span at residues 249 to 269 (LPDITSALVSIVSLALFLKVW). Over 270–313 (RPKNTETAISMGQSAGAMVVNKPSSGGPVPSEYSLGQIIRAWSP) the chain is Cytoplasmic. A helical transmembrane segment spans residues 314–334 (FLILTVLVTIWTMKPFKALFA). Residues 335 to 378 (PGGAFYSLVINFQIPHLHQQVLKAAPIVAQPTPMDAVFKFDPLS) lie on the Periplasmic side of the membrane. A helical transmembrane segment spans residues 379-399 (AGGTAIFIAAIISIFILGVGI). The Cytoplasmic segment spans residues 400-408 (KKGIGVFAE). Residues 409 to 429 (TLISLKWPILSIGMVLAFAFV) traverse the membrane as a helical segment. Over 430-438 (TNYSGMSTT) the chain is Periplasmic. A helical transmembrane segment spans residues 439 to 459 (LALVLAGTGVMFPFFSPFLGW). Topologically, residues 460–536 (LGVFLTGSDT…ELFRYTVKHS (77 aa)) are cytoplasmic. Residues 537–557 (LIFASVIGIITLLQAYVFTGM) traverse the membrane as a helical segment. Residues 558–560 (LVS) are Periplasmic-facing.

The protein belongs to the lactate permease family.

The protein localises to the cell inner membrane. It carries out the reaction glycolate(in) + H(+)(in) = glycolate(out) + H(+)(out). The enzyme catalyses (S)-lactate(in) + H(+)(in) = (S)-lactate(out) + H(+)(out). The catalysed reaction is (R)-lactate(in) + H(+)(in) = (R)-lactate(out) + H(+)(out). Its activity is regulated as follows. Inhibited by the proton ionophore carbonyl cyanide m-chlorophenylhydrazone (CCCP). Functionally, uptake of glycolate across the membrane. Can also transport L-lactate and D-lactate. Seems to be driven by a proton motive force. This Escherichia coli (strain K12) protein is Glycolate permease GlcA.